We begin with the raw amino-acid sequence, 301 residues long: Probable alpha-L-glutamate ligase (301 aa).

One can recognise an ATP-grasp domain in the interval 104–287 (LQLLSRKGIG…IAGIIIQYLE (184 aa)). ATP is bound by residues K141, 178–179 (EY), D187, and 211–213 (RSN). 3 residues coordinate Mg(2+): D248, E260, and N262. The Mn(2+) site is built by D248, E260, and N262.

Belongs to the RimK family. Mg(2+) serves as cofactor. Requires Mn(2+) as cofactor.

The chain is Probable alpha-L-glutamate ligase from Pseudomonas aeruginosa (strain UCBPP-PA14).